Here is a 424-residue protein sequence, read N- to C-terminus: Serine hydroxymethyltransferase (424 aa).

(6S)-5,6,7,8-tetrahydrofolate-binding positions include Leu-118 and 122–124 (GHL). Lys-227 bears the N6-(pyridoxal phosphate)lysine mark. 351–353 (SPF) is a (6S)-5,6,7,8-tetrahydrofolate binding site.

The protein belongs to the SHMT family. As to quaternary structure, homodimer. The cofactor is pyridoxal 5'-phosphate.

The protein resides in the cytoplasm. The catalysed reaction is (6R)-5,10-methylene-5,6,7,8-tetrahydrofolate + glycine + H2O = (6S)-5,6,7,8-tetrahydrofolate + L-serine. The protein operates within one-carbon metabolism; tetrahydrofolate interconversion. It functions in the pathway amino-acid biosynthesis; glycine biosynthesis; glycine from L-serine: step 1/1. Catalyzes the reversible interconversion of serine and glycine with tetrahydrofolate (THF) serving as the one-carbon carrier. This reaction serves as the major source of one-carbon groups required for the biosynthesis of purines, thymidylate, methionine, and other important biomolecules. Also exhibits THF-independent aldolase activity toward beta-hydroxyamino acids, producing glycine and aldehydes, via a retro-aldol mechanism. The chain is Serine hydroxymethyltransferase from Pseudothermotoga lettingae (strain ATCC BAA-301 / DSM 14385 / NBRC 107922 / TMO) (Thermotoga lettingae).